The sequence spans 670 residues: Probable metal-nicotianamine transporter YSL4 (670 aa).

A run of 13 helical transmembrane segments spans residues Ile-35–His-55, Leu-59–Ile-79, Cys-107–Met-127, Gly-151–Val-171, Leu-273–Ile-293, Val-318–Val-338, Phe-389–Phe-409, Phe-416–Gly-436, Gly-450–Ala-470, Leu-507–Phe-527, Pro-559–Ile-579, Phe-601–Trp-621, and Val-636–Ile-656.

The protein belongs to the YSL (TC 2.A.67.2) family.

The protein resides in the membrane. Its function is as follows. May be involved in the transport of nicotianamine-chelated metals. The polypeptide is Probable metal-nicotianamine transporter YSL4 (YSL4) (Arabidopsis thaliana (Mouse-ear cress)).